The following is a 97-amino-acid chain: Co-chaperonin GroES (97 aa).

The protein belongs to the GroES chaperonin family. As to quaternary structure, heptamer of 7 subunits arranged in a ring. Interacts with the chaperonin GroEL.

The protein resides in the cytoplasm. Together with the chaperonin GroEL, plays an essential role in assisting protein folding. The GroEL-GroES system forms a nano-cage that allows encapsulation of the non-native substrate proteins and provides a physical environment optimized to promote and accelerate protein folding. GroES binds to the apical surface of the GroEL ring, thereby capping the opening of the GroEL channel. In Pseudomonas putida (strain ATCC 700007 / DSM 6899 / JCM 31910 / BCRC 17059 / LMG 24140 / F1), this protein is Co-chaperonin GroES.